The chain runs to 318 residues: ADP-L-glycero-D-manno-heptose-6-epimerase (318 aa).

NADP(+)-binding positions include Phe10–Ile11, Asp31–Asn32, Lys38, Lys53, Gln76–Ser80, and Asn93. Tyr141 functions as the Proton acceptor in the catalytic mechanism. Lys145 lines the NADP(+) pocket. Position 172 (Asn172) interacts with substrate. 2 residues coordinate NADP(+): Val173 and Lys181. The active-site Proton acceptor is Lys181. Residues Arg183, His190, Phe204–Ser207, Arg212, and Tyr276 each bind substrate.

Belongs to the NAD(P)-dependent epimerase/dehydratase family. HldD subfamily. Homopentamer. NADP(+) is required as a cofactor.

It carries out the reaction ADP-D-glycero-beta-D-manno-heptose = ADP-L-glycero-beta-D-manno-heptose. It participates in nucleotide-sugar biosynthesis; ADP-L-glycero-beta-D-manno-heptose biosynthesis; ADP-L-glycero-beta-D-manno-heptose from D-glycero-beta-D-manno-heptose 7-phosphate: step 4/4. In terms of biological role, catalyzes the interconversion between ADP-D-glycero-beta-D-manno-heptose and ADP-L-glycero-beta-D-manno-heptose via an epimerization at carbon 6 of the heptose. The sequence is that of ADP-L-glycero-D-manno-heptose-6-epimerase from Brachyspira hyodysenteriae (strain ATCC 49526 / WA1).